Here is a 67-residue protein sequence, read N- to C-terminus: Kappa-conotoxin-like 1 (67 aa).

Positions 1-26 are cleaved as a signal peptide; that stretch reads MMFRLTSVSCFLLVIACLNLFQVVLT. Intrachain disulfides connect Cys-29-Cys-43, Cys-36-Cys-48, Cys-42-Cys-51, and Cys-47-Cys-55. Ile-59 carries the post-translational modification Isoleucine amide. Residues 63–67 constitute a propeptide that is removed on maturation; the sequence is ATFQE.

This sequence belongs to the conotoxin I2 superfamily. As to expression, expressed by the venom duct.

It is found in the secreted. Inhibits the vertebrate voltage-gated potassium channels Kv1.1/KCNA1 and Kv1.3/KCNA3. The protein is Kappa-conotoxin-like 1 of Conus vexillum (Flag cone).